The primary structure comprises 213 residues: Superoxide dismutase [Fe] (213 aa).

His26, His73, Asp156, and His160 together coordinate Fe cation.

The protein belongs to the iron/manganese superoxide dismutase family. In terms of assembly, homodimer. The cofactor is Fe cation.

The enzyme catalyses 2 superoxide + 2 H(+) = H2O2 + O2. In terms of biological role, destroys superoxide anion radicals which are normally produced within the cells and which are toxic to biological systems. The sequence is that of Superoxide dismutase [Fe] (sodB) from Helicobacter pylori (strain J99 / ATCC 700824) (Campylobacter pylori J99).